Reading from the N-terminus, the 152-residue chain is UPF0266 membrane protein YobD (152 aa).

The next 3 helical transmembrane spans lie at 6-26, 45-65, and 67-87; these read LVLI…QFIM, VDSV…VTSH, and AQMT…IFWI.

It belongs to the UPF0266 family.

The protein resides in the cell inner membrane. The chain is UPF0266 membrane protein YobD from Salmonella dublin (strain CT_02021853).